Consider the following 83-residue polypeptide: Translational regulator CsrA (83 aa).

The protein belongs to the CsrA/RsmA family. As to quaternary structure, homodimer; the beta-strands of each monomer intercalate to form a hydrophobic core, while the alpha-helices form wings that extend away from the core.

The protein resides in the cytoplasm. Functionally, a translational regulator that binds mRNA to regulate translation initiation and/or mRNA stability. Usually binds in the 5'-UTR at or near the Shine-Dalgarno sequence preventing ribosome-binding, thus repressing translation. Its main target seems to be the major flagellin gene, while its function is anatagonized by FliW. The chain is Translational regulator CsrA from Thermotoga maritima (strain ATCC 43589 / DSM 3109 / JCM 10099 / NBRC 100826 / MSB8).